The sequence spans 852 residues: METRYSAADIEAKWQQQWLELGLDKTPSQSDKPKFYALSMFPYPSGKLHMGHVRNYVITDVIARYKRMQGYRVLHPMGWDAFGLPAENAAIDRGIPPAKWTYQNIAQMREQLKQLGLSIDWDREVATCSPDYYKWTQWLFLQFYKAGLAYQKEAAVNWDPIDQTVLANEQVDAEGRSWRSGAIVEKKLLRQWFLKITDYAEELLQDLNTLDGWPERVKLMQENWIGKSTGAHLEFPVVGSDEKVAVFTTRLDTVFGVTYVVLAPEHPLVAQVTTPAQKAAVDAFIAEVSQESEQDRTADDKPKKGVATGGMVTNPFTGEEVPILIANYVLYEYGTGAVMGVPAHDSRDCKFAKENNLPIKMVIIPEGGDATAVLTEAYTEAGIMVNSGQFDGLVSTEGKKAIAKFAAENGFGREQIQYRLRDWLISRQRYWGCPIPMIYCDDCGVVPVPDSDLPVVLPEDVEFSARGGSPLAQMADWQAVDCPCCGKAARRETDTMDTFIDSSWYFLRYTDANNTEKPFALDPVNDWMAVDQYVGGIEHAILHLLYSRFFTKVVRDRQLVSVDEPFKRLLTQGMVQALTYKNPRTNKYVPADQVDPNDPKDPETGEPLTGFYEKMSKSKYNGVDPALVLDKYGADTARMFILFKAPPEKDLEWDDADVEGQFRFLNRIWNLVAGYEAAETSVKATGELSKAEKDLRRAVHTAIKEIQEDLEGDYQFNTAIAELMKLNNAIKDVKCVDSPVYKEAIETLILLLAPFAPHIADELWSNLGHSESIHTVPFPQLDETALTVDEITIVIQILGKTRGTIQVPAGISKADLEKTATASDIAQRYIAGKEIKKVIVVPNKLVNFVIPK.

Residues 42–52 (PYPSGKLHMGH) carry the 'HIGH' region motif. The disordered stretch occupies residues 586–606 (NKYVPADQVDPNDPKDPETGE). A 'KMSKS' region motif is present at residues 614–618 (KMSKS). Position 617 (K617) interacts with ATP.

Belongs to the class-I aminoacyl-tRNA synthetase family.

It localises to the cytoplasm. The catalysed reaction is tRNA(Leu) + L-leucine + ATP = L-leucyl-tRNA(Leu) + AMP + diphosphate. The chain is Leucine--tRNA ligase from Picosynechococcus sp. (strain ATCC 27264 / PCC 7002 / PR-6) (Agmenellum quadruplicatum).